Here is a 225-residue protein sequence, read N- to C-terminus: Heptaprenylglyceryl phosphate synthase (225 aa).

Sn-glycerol 1-phosphate is bound at residue Lys-6. Mg(2+)-binding residues include Asp-8 and Thr-34. Residues 153-158, Gly-183, and 203-204 contribute to the sn-glycerol 1-phosphate site; these read YIEYSG and GN.

It belongs to the GGGP/HepGP synthase family. Group I subfamily. As to quaternary structure, homodimer. Requires Mg(2+) as cofactor.

It catalyses the reaction sn-glycerol 1-phosphate + all-trans-heptaprenyl diphosphate = 3-heptaprenyl-sn-glycero-1-phosphate + diphosphate. It functions in the pathway membrane lipid metabolism; glycerophospholipid metabolism. Prenyltransferase that catalyzes in vivo the transfer of the heptaprenyl moiety of heptaprenyl pyrophosphate (HepPP; 35 carbon atoms) to the C3 hydroxyl of sn-glycerol-1-phosphate (G1P), producing heptaprenylglyceryl phosphate (HepGP). This reaction is an ether-bond-formation step in the biosynthesis of archaea-type G1P-based membrane lipids found in Bacillales. This is Heptaprenylglyceryl phosphate synthase from Listeria welshimeri serovar 6b (strain ATCC 35897 / DSM 20650 / CCUG 15529 / CIP 8149 / NCTC 11857 / SLCC 5334 / V8).